The chain runs to 427 residues: Beta-1,3-galactosyl-O-glycosyl-glycoprotein beta-1,6-N-acetylglucosaminyltransferase (427 aa).

Residues 1–9 (MLRKLWRRK) lie on the Cytoplasmic side of the membrane. Residues 5–9 (LWRRK) are mediates interaction with GOLPH3 and is necessary and sufficient for localization to the Golgi. Residues 10–32 (LFSFPTKYYFLFLAFSVVTFTVL) traverse the membrane as a helical; Signal-anchor for type II membrane protein segment. Residues 33–121 (RIHQKTEFVN…EPLSKEEAGF (89 aa)) form a stem region region. Over 33–427 (RIHQKTEFVN…RHKALETLKP (395 aa)) the chain is Lumenal. N-linked (GlcNAc...) asparagine glycosylation is found at Asn-58 and Asn-95. 4 disulfides stabilise this stretch: Cys-59–Cys-412, Cys-100–Cys-172, Cys-151–Cys-199, and Cys-372–Cys-380. The segment at 122 to 427 (PIAYSIVVHH…RHKALETLKP (306 aa)) is catalytic. Residues 128 to 130 (VVH), 155 to 157 (DAK), and Tyr-187 contribute to the UDP-N-acetyl-alpha-D-glucosamine site. Positions 243, 251, 254, 320, 341, and 358 each coordinate a glycoprotein. Glu-320 (nucleophile) is an active-site residue. The UDP-N-acetyl-alpha-D-glucosamine site is built by Arg-377 and Lys-400.

The protein belongs to the glycosyltransferase 14 family. In terms of assembly, interacts with GOLPH3; may control GCNT1 retention in the Golgi. As to expression, expressed in tracheal submucosal glands and epithelium (at protein level).

It is found in the golgi apparatus membrane. The enzyme catalyses a 3-O-[beta-D-galactosyl-(1-&gt;3)-N-acetyl-alpha-D-galactosaminyl]-L-seryl-[protein] + UDP-N-acetyl-alpha-D-glucosamine = 3-O-{beta-D-galactosyl-(1-&gt;3)-[N-acetyl-beta-D-glucosaminyl-(1-&gt;6)]-N-acetyl-alpha-D-galactosaminyl}-L-seryl-[protein] + UDP + H(+). The catalysed reaction is a 3-O-[beta-D-galactosyl-(1-&gt;3)-N-acetyl-alpha-D-galactosaminyl]-L-threonyl-[protein] + UDP-N-acetyl-alpha-D-glucosamine = a 3-O-{beta-D-galactosyl-(1-&gt;3)-[N-acetyl-beta-D-glucosaminyl-(1-&gt;6)]-N-acetyl-alpha-D-galactosaminyl}-L-threonyl-[protein] + UDP + H(+). It catalyses the reaction a globoside GalGb4Cer + UDP-N-acetyl-alpha-D-glucosamine = a globoside GlcNAc-(beta1-&gt;6)-GalGb4Cer + UDP + H(+). It carries out the reaction a ganglioside GA1 + UDP-N-acetyl-alpha-D-glucosamine = a ganglioside beta-D-GlcNAc-(1-&gt;6)-GA1 + UDP + H(+). It functions in the pathway protein modification; protein glycosylation. Its pathway is glycolipid biosynthesis. Its function is as follows. Glycosyltransferase that catalyzes the transfer of an N-acetylglucosamine (GlcNAc) moiety in beta1-6 linkage from UDP-GlcNAc onto mucin-type core 1 O-glycan to form the branched mucin-type core 2 O-glycan. The catalysis is metal ion-independent and occurs with inversion of the anomeric configuration of sugar donor. Selectively involved in synthesis of mucin-type core 2 O-glycans that serve as scaffolds for the display of selectin ligand sialyl Lewis X epitope by myeloid cells, with an impact on homeostasis and recruitment to inflammatory sites. Can also act on glycolipid substrates. Transfers GlcNAc moiety to GalGb4Cer globosides in a reaction step to the synthesis of stage-specific embryonic antigen 1 (SSEA-1) determinant. Can use Galbeta1-3GalNAcalpha1- and Galbeta1-3GalNAcbeta1- oligosaccharide derivatives as acceptor substrates. In Bos taurus (Bovine), this protein is Beta-1,3-galactosyl-O-glycosyl-glycoprotein beta-1,6-N-acetylglucosaminyltransferase (GCNT1).